We begin with the raw amino-acid sequence, 823 residues long: Tax1-binding protein 1 homolog B (823 aa).

The stretch at 149 to 487 (VTTKASYLEQ…QKQVVKFNEQ (339 aa)) forms a coiled coil. 2 disordered regions span residues 342 to 377 (HRQL…QQAN) and 486 to 519 (EQQG…STSD). A compositionally biased stretch (basic and acidic residues) spans 356-368 (KALREQLRQKEEQ). Positions 498–518 (AAAGPLSASPEASAPGSPSTS) are enriched in low complexity. The stretch at 548–638 (QMLNEERERC…NREEEQKDSN (91 aa)) forms a coiled coil. The interval 650–746 (MPYAQDDPSP…EPAAPEPAEF (97 aa)) is disordered. Acidic residues predominate over residues 723-739 (LEEPEEPQSTQNDDEPA). 2 UBZ1-type zinc fingers span residues 762 to 788 (QKRC…VESH) and 789 to 815 (WKIC…VLTH). 8 residues coordinate Zn(2+): Cys765, Cys768, His784, His788, Cys792, Cys795, His811, and His815.

As to expression, expressed at relatively high levels in both proximal and distal regions of the fin bud during pectoral fin development.

Its function is as follows. May have anti-apoptotic activity. This is Tax1-binding protein 1 homolog B (tax1bp1b) from Danio rerio (Zebrafish).